The chain runs to 568 residues: Vitamin H transporter 1 (568 aa).

12 helical membrane-spanning segments follow: residues 85-105 (IIPCLWILYFLSCCLRFTVSL), 123-143 (GYSAHYLALGLALFYVGYIIF), 158-178 (IWVSRIQLTIGVVGACHAVLG), 187-207 (YVALRFFLGVAESGLWPGLAY), 222-242 (IGWYYTAAQIAAAAVSLVSAG), 257-277 (WMFLIWGVVAIAQALSIPWWL), 345-365 (VWPFILMYFGIVGVGNGIFNY), 384-404 (LLNAPIWLADALGIVTVMPLY), 411-431 (FSFFTGSCLIIIAGLAVANYA), 439-459 (GGLLMIGFGLGPTVPICMAWC), 470-490 (VGVASSLALVTGLGNLGSVVT), and 508-528 (NDVCIALIGVSIIACGIEFLL). The interval 547–568 (VEDEQEMTDIKPALPSSQQADA) is disordered.

It belongs to the major facilitator superfamily. Allantoate permease family.

The protein localises to the membrane. Involved in uptake of biotin and desthiobiotin with the concomitant entry of protons. This chain is Vitamin H transporter 1 (vht1), found in Schizosaccharomyces pombe (strain 972 / ATCC 24843) (Fission yeast).